The primary structure comprises 73 residues: Large ribosomal subunit protein bL31 (73 aa).

It belongs to the bacterial ribosomal protein bL31 family. Type A subfamily. In terms of assembly, part of the 50S ribosomal subunit.

Binds the 23S rRNA. The protein is Large ribosomal subunit protein bL31 of Rhizobium etli (strain CIAT 652).